Here is a 377-residue protein sequence, read N- to C-terminus: MTDSPVLALAKELISRQSVTPADAGCQDLMIERLKALGFEIESMVFEDTTNFWARRGTQSPLFVFAGHTDVVPAGPLSQWHTPPFEPTVIDGFLHGRGAADMKGSLACMIVAVERFIAEHPDHQGSIGFLITSDEEGPFINGTVRVVETLMARNELIDMCIVGEPSSTLAVGDVVKNGRRGSITGDLKVKGTQGHVAYPHLANNPVHKALPALAELAATQWDEGNAYFPPTSFQIPNLQAGTGASNVIPGEFDVQFNFRFSTELTDEEIKRRVHSVLDAHGLDYGVKWTLSGQPFLTDTGELLAAVVAAVEEVNHQAPALLTTGGTSDGRFIAQMGAQVVELGPVNATIHKVNECVRIADLEKLTDMYQKTLNHLLG.

H68 is a Zn(2+) binding site. Residue D70 is part of the active site. Residue D101 coordinates Zn(2+). E135 acts as the Proton acceptor in catalysis. Zn(2+) contacts are provided by E136, E164, and H350.

The protein belongs to the peptidase M20A family. DapE subfamily. As to quaternary structure, homodimer. Zn(2+) is required as a cofactor. The cofactor is Co(2+).

The enzyme catalyses N-succinyl-(2S,6S)-2,6-diaminopimelate + H2O = (2S,6S)-2,6-diaminopimelate + succinate. Its pathway is amino-acid biosynthesis; L-lysine biosynthesis via DAP pathway; LL-2,6-diaminopimelate from (S)-tetrahydrodipicolinate (succinylase route): step 3/3. Functionally, catalyzes the hydrolysis of N-succinyl-L,L-diaminopimelic acid (SDAP), forming succinate and LL-2,6-diaminopimelate (DAP), an intermediate involved in the bacterial biosynthesis of lysine and meso-diaminopimelic acid, an essential component of bacterial cell walls. This is Succinyl-diaminopimelate desuccinylase from Vibrio cholerae serotype O1 (strain ATCC 39541 / Classical Ogawa 395 / O395).